A 421-amino-acid polypeptide reads, in one-letter code: 3-isopropylmalate dehydratase large subunit (421 aa).

[4Fe-4S] cluster contacts are provided by C302, C362, and C365.

Belongs to the aconitase/IPM isomerase family. LeuC type 2 subfamily. As to quaternary structure, heterodimer of LeuC and LeuD. The cofactor is [4Fe-4S] cluster.

The enzyme catalyses (2R,3S)-3-isopropylmalate = (2S)-2-isopropylmalate. It functions in the pathway amino-acid biosynthesis; L-leucine biosynthesis; L-leucine from 3-methyl-2-oxobutanoate: step 2/4. Its function is as follows. Catalyzes the isomerization between 2-isopropylmalate and 3-isopropylmalate, via the formation of 2-isopropylmaleate. The polypeptide is 3-isopropylmalate dehydratase large subunit (Campylobacter fetus subsp. fetus (strain 82-40)).